The sequence spans 329 residues: Putative helicase 109L (329 aa).

The Helicase ATP-binding domain occupies 105 to 259 (LTLLTQHKSC…LFDMFFGPEM (155 aa)). 118-125 (CYTGFGKT) contributes to the ATP binding site. The DEAH box signature appears at 212–215 (DEAH).

It belongs to the DEAD box helicase family. DEAH subfamily.

The polypeptide is Putative helicase 109L (Invertebrate iridescent virus 3 (IIV-3)).